We begin with the raw amino-acid sequence, 124 residues long: Phosphoribosyl-AMP cyclohydrolase (124 aa).

Asp82 provides a ligand contact to Mg(2+). Residue Cys83 participates in Zn(2+) binding. Residues Asp84 and Asp86 each contribute to the Mg(2+) site. Residues Cys99 and Cys106 each contribute to the Zn(2+) site.

Belongs to the PRA-CH family. As to quaternary structure, homodimer. Mg(2+) is required as a cofactor. It depends on Zn(2+) as a cofactor.

It is found in the cytoplasm. It catalyses the reaction 1-(5-phospho-beta-D-ribosyl)-5'-AMP + H2O = 1-(5-phospho-beta-D-ribosyl)-5-[(5-phospho-beta-D-ribosylamino)methylideneamino]imidazole-4-carboxamide. Its pathway is amino-acid biosynthesis; L-histidine biosynthesis; L-histidine from 5-phospho-alpha-D-ribose 1-diphosphate: step 3/9. Catalyzes the hydrolysis of the adenine ring of phosphoribosyl-AMP. The sequence is that of Phosphoribosyl-AMP cyclohydrolase from Zymomonas mobilis subsp. mobilis (strain ATCC 31821 / ZM4 / CP4).